Reading from the N-terminus, the 404-residue chain is Argininosuccinate synthase (404 aa).

ATP is bound by residues 11-19 and Ala38; that span reads AYSGGLDTS. Positions 91 and 96 each coordinate L-citrulline. Gly121 serves as a coordination point for ATP. L-aspartate-binding residues include Thr123, Asn127, and Asp128. Asn127 contacts L-citrulline. L-citrulline is bound by residues Arg131, Ser181, Ser190, Glu266, and Tyr278.

The protein belongs to the argininosuccinate synthase family. Type 1 subfamily. In terms of assembly, homotetramer.

The protein resides in the cytoplasm. It catalyses the reaction L-citrulline + L-aspartate + ATP = 2-(N(omega)-L-arginino)succinate + AMP + diphosphate + H(+). Its pathway is amino-acid biosynthesis; L-arginine biosynthesis; L-arginine from L-ornithine and carbamoyl phosphate: step 2/3. This chain is Argininosuccinate synthase, found in Sulfurimonas denitrificans (strain ATCC 33889 / DSM 1251) (Thiomicrospira denitrificans (strain ATCC 33889 / DSM 1251)).